A 290-amino-acid chain; its full sequence is N-acetylmannosamine kinase (290 aa).

Residues 6-13 and 132-139 each bind ATP; these read ALDIGGTK and GVGGGIIL. Positions 156, 166, 168, and 173 each coordinate Zn(2+).

It belongs to the ROK (NagC/XylR) family. NanK subfamily. As to quaternary structure, homodimer.

The catalysed reaction is an N-acyl-D-mannosamine + ATP = an N-acyl-D-mannosamine 6-phosphate + ADP + H(+). Its pathway is amino-sugar metabolism; N-acetylneuraminate degradation; D-fructose 6-phosphate from N-acetylneuraminate: step 2/5. Catalyzes the phosphorylation of N-acetylmannosamine (ManNAc) to ManNAc-6-P. This is N-acetylmannosamine kinase from Yersinia pestis (strain Pestoides F).